Here is a 670-residue protein sequence, read N- to C-terminus: Transketolase (670 aa).

His-31 provides a ligand contact to substrate. Thiamine diphosphate is bound by residues His-71 and 120–122 (GPL). A Mg(2+)-binding site is contributed by Asp-161. 2 residues coordinate thiamine diphosphate: Gly-162 and Asn-191. Positions 191 and 193 each coordinate Mg(2+). Substrate is bound by residues His-268, Arg-362, and Ser-389. Position 268 (His-268) interacts with thiamine diphosphate. Catalysis depends on Glu-416, which acts as the Proton donor. Phe-443 contacts thiamine diphosphate. Residues His-467, Asp-475, and Arg-528 each contribute to the substrate site.

As to quaternary structure, homodimer. Requires Mg(2+) as cofactor. Ca(2+) serves as cofactor. The cofactor is Mn(2+). It depends on Co(2+) as a cofactor. Thiamine diphosphate is required as a cofactor.

The enzyme catalyses D-sedoheptulose 7-phosphate + D-glyceraldehyde 3-phosphate = aldehydo-D-ribose 5-phosphate + D-xylulose 5-phosphate. Its function is as follows. Catalyzes the transfer of a two-carbon ketol group from a ketose donor to an aldose acceptor, via a covalent intermediate with the cofactor thiamine pyrophosphate. This is Transketolase (tkt) from Nostoc sp. (strain PCC 7120 / SAG 25.82 / UTEX 2576).